We begin with the raw amino-acid sequence, 294 residues long: Small ribosomal subunit biogenesis GTPase RsgA (294 aa).

Residues 63 to 223 enclose the CP-type G domain; the sequence is KNELLRPPIA…VADTPGFSSL (161 aa). GTP contacts are provided by residues 112-115 and 166-174; these read SKID and GQSGVGKSS. 4 residues coordinate Zn(2+): C247, C252, H254, and C260.

The protein belongs to the TRAFAC class YlqF/YawG GTPase family. RsgA subfamily. As to quaternary structure, monomer. Associates with 30S ribosomal subunit, binds 16S rRNA. Zn(2+) serves as cofactor.

Its subcellular location is the cytoplasm. Functionally, one of several proteins that assist in the late maturation steps of the functional core of the 30S ribosomal subunit. Helps release RbfA from mature subunits. May play a role in the assembly of ribosomal proteins into the subunit. Circularly permuted GTPase that catalyzes slow GTP hydrolysis, GTPase activity is stimulated by the 30S ribosomal subunit. This chain is Small ribosomal subunit biogenesis GTPase RsgA, found in Halalkalibacterium halodurans (strain ATCC BAA-125 / DSM 18197 / FERM 7344 / JCM 9153 / C-125) (Bacillus halodurans).